A 145-amino-acid polypeptide reads, in one-letter code: MTIPFWQEKTLEQMTENEWESLCDGCGKCCLHKLMDEDSDEVYYTNVACSWLNDKTCSCKDYPNRFTSGEECLKLTRDKIDEFHWLPDTCAYRLLSESKPIPEWHPLITGSKSEMHAAGESVRNKVVYEIDVVDWEDHILNHPNR.

This sequence belongs to the UPF0260 family.

The protein is UPF0260 protein VS_0923 of Vibrio atlanticus (strain LGP32) (Vibrio splendidus (strain Mel32)).